Here is a 545-residue protein sequence, read N- to C-terminus: T-complex protein 1 subunit gamma (545 aa).

Residue M1 is modified to N-acetylmethionine. The disordered stretch occupies residues 1 to 24; it reads MMGHRPVLVLSQNTKRESGRKVQS. S11 is modified (phosphoserine). Residue K15 forms a Glycyl lysine isopeptide (Lys-Gly) (interchain with G-Cter in SUMO2) linkage. G42 is a binding site for ADP. G42 lines the ATP pocket. D93 serves as a coordination point for Mg(2+). ADP is bound by residues G94, T95, T96, S97, T162, and K163. Residues G94, T95, and T96 each coordinate ATP. A Phosphoserine modification is found at S170. Residue K222 is modified to N6-acetyllysine. Phosphoserine is present on residues S243 and S244. Y247 bears the Phosphotyrosine mark. Glycyl lysine isopeptide (Lys-Gly) (interchain with G-Cter in SUMO2) cross-links involve residues K248 and K249. Position 252 is a phosphoserine (S252). The cysteines at positions 366 and 372 are disulfide-linked. A Glycyl lysine isopeptide (Lys-Gly) (interchain with G-Cter in SUMO2) cross-link involves residue K381. Residue G411 participates in ADP binding. Residue G411 participates in ATP binding. T430 and T459 each carry phosphothreonine. G482, E483, E497, and K502 together coordinate ADP. G482 contacts ATP. ATP is bound at residue E497. The disordered stretch occupies residues 526 to 545; sequence HKKKGDDQSRQGGAPDAGQE.

The protein belongs to the TCP-1 chaperonin family. In terms of assembly, component of the chaperonin-containing T-complex (TRiC), a hexadecamer composed of two identical back-to-back stacked rings enclosing a protein folding chamber. Each ring is made up of eight different subunits: TCP1/CCT1, CCT2, CCT3, CCT4, CCT5, CCT6A/CCT6, CCT7, CCT8. Interacts with PACRG. Interacts with DNAAF4. Interacts with DLEC1.

Its subcellular location is the cytoplasm. The catalysed reaction is ATP + H2O = ADP + phosphate + H(+). Component of the chaperonin-containing T-complex (TRiC), a molecular chaperone complex that assists the folding of actin, tubulin and other proteins upon ATP hydrolysis. The TRiC complex mediates the folding of WRAP53/TCAB1, thereby regulating telomere maintenance. As part of the TRiC complex may play a role in the assembly of BBSome, a complex involved in ciliogenesis regulating transports vesicles to the cilia. In Homo sapiens (Human), this protein is T-complex protein 1 subunit gamma (CCT3).